The sequence spans 372 residues: MVRRALRLAAGTASLAAGTWLLRALHGTPAALGADAASIRAVSEQSPNYRDGAFVNLDPASMFTLDREELRLIVWELVARHSASRPAAPIPLASPNIYRGDASRLAVSWFGHSTALLEIDGYRVLTDPVWSDRCSPSDVVGPQRLHPPPVQLAALPAVDAVVISHDHYDHLDIDTVVALVGMQRAPFLVPLGVGAHLRSWGVPQDRIVELDWNQSAQVDELTVVCVPARHFSGRFLSRNTTLWASWAFVGPNHRAYFGGDTGYTKSFTQIGADHGPFDLTLLPIGAYNTAWPDIHMNPEEAVRAHLDVTDSGSGMLVPVHWGTFRLAPHPWGEPVERLLAAAEPEHVTVAVPLPGQRVDPTGPMRLHPWWRL.

An N-terminal signal peptide occupies residues 1–33 (MVRRALRLAAGTASLAAGTWLLRALHGTPAALG).

The protein to K.pneumoniae RomA.

This is an uncharacterized protein from Mycobacterium bovis (strain ATCC BAA-935 / AF2122/97).